Here is a 231-residue protein sequence, read N- to C-terminus: Red fluorescent protein eqFP611 (231 aa).

A cross-link (2-iminomethyl-5-imidazolinone (Met-Gly)) is located at residues 63 to 65; sequence MYG. Tyrosine 64 carries the post-translational modification (E)-2,3-didehydrotyrosine.

It belongs to the GFP family. In terms of assembly, monomer. Contains a chromophore consisting of modified amino acid residues. The chromophore is formed by autocatalytic backbone condensation between Xaa-N and Gly-(N+2), oxidation of Tyr-(N+1) to didehydrotyrosine, and formation of a double bond to the alpha-amino nitrogen of residue Xaa-N. Maturation of the chromophore requires nothing other than molecular oxygen.

Pigment protein. The protein is Red fluorescent protein eqFP611 of Entacmaea quadricolor (Bubble-tip anemone).